Here is a 338-residue protein sequence, read N- to C-terminus: Glyceraldehyde-3-phosphate dehydrogenase 2 (338 aa).

NAD(+) is bound by residues 13 to 14 (TI) and G111. 140–142 (SCN) contacts D-glyceraldehyde 3-phosphate. C141 acts as the Nucleophile in catalysis. R169 serves as a coordination point for NAD(+). Position 195 to 196 (195 to 196 (HG)) interacts with D-glyceraldehyde 3-phosphate. NAD(+) is bound at residue Q300.

Belongs to the glyceraldehyde-3-phosphate dehydrogenase family. Homotetramer.

The protein resides in the cytoplasm. The catalysed reaction is D-glyceraldehyde 3-phosphate + phosphate + NADP(+) = (2R)-3-phospho-glyceroyl phosphate + NADPH + H(+). It catalyses the reaction D-glyceraldehyde 3-phosphate + phosphate + NAD(+) = (2R)-3-phospho-glyceroyl phosphate + NADH + H(+). It functions in the pathway carbohydrate degradation; glycolysis; pyruvate from D-glyceraldehyde 3-phosphate: step 1/5. The chain is Glyceraldehyde-3-phosphate dehydrogenase 2 from Methanosarcina barkeri (strain Fusaro / DSM 804).